Consider the following 176-residue polypeptide: Cell division control protein 31 (176 aa).

A compositionally biased stretch (basic residues) spans 1–12; sequence MFANARAKRRSR. A disordered region spans residues 1 to 21; it reads MFANARAKRRSRASSPTPARL. EF-hand domains are found at residues 34–69, 70–105, 107–142, and 143–176; these read EQRQ…LGFN, AEKS…KIVE, DPLE…LNEN, and IDDQ…MDEA. Ca(2+)-binding residues include Asp47, Asp49, Asp51, and Glu58. Asp156, Asp158, Asp160, Glu162, and Glu167 together coordinate Ca(2+).

Belongs to the centrin family. In terms of assembly, component of the spindle pole body (SPB), acting as the connector of microtubule arrays in the cytoplasm and the nucleoplasm, is involved in nuclear positioning before chromosome segregation, SPB separation, spindle formation, chromosome segregation, nuclear migration into the bud, nuclear reorientation after cytokinesis and nuclear fusion during conjugation. The SPB half-bridge, which is tightly associated with the cytoplasmic side of the nuclear envelope and the SPB, is playing a key role as the starting structure for and in the initiation of SPB duplication in G1. Within the complex, interacts with sad1.

It localises to the nucleus. In terms of biological role, required for the proper coordination between exit from mitosis and the initiation of septation. Has a role in bipolar spindle formation during spindle pole body (SPB) duplication. Required for the localization of sad1 to the SPB. This chain is Cell division control protein 31 (cdc31), found in Schizosaccharomyces pombe (strain 972 / ATCC 24843) (Fission yeast).